Here is a 461-residue protein sequence, read N- to C-terminus: MSQHHILPQHQRADLNRSICDYVQRCGAEESLVVGLRQLFGLSAEECDATRNGRDPDLLLKKWNSIIRLHRKILDLEQKCQQLTEELEAVPTEAYGKAGRGVSHVLWTPRSNPTFQLDVGASVTDIKLHPSLPIAFLATDQGKVVAYDLFNRSMPLHSTQAHMKGVTSLAVMEAENGSLLISTTSKDLQCKIWSFTDNAAFQLLRTLSSHEHIVSQSCFLRSGSDLLLATCSRDLTVKVWDTKSGWCIKSFQPHNQWVRTLELHGDYVITGSNDATIRLSHWPSGNGLSMAVMHEFPIERVLIIPMRANTAQKTEADDDQVELEYRKYDPDYSPLGFKYCISCSRDNLIVLWKIPLPKFIPHRPPQPNLLQTNFEKVHVFKGHTSWVRDIKVRGRHLFSCSDDRSIRCWDLVTGQCLKVWPEASHGFINCLSVDSDVSNDKLLRELFLSGSIDGKCNVFMR.

The stretch at 64-93 (NSIIRLHRKILDLEQKCQQLTEELEAVPTE) forms a coiled coil. WD repeat units follow at residues 118–157 (DVGASVTDIKLHPSLPIAFLATDQGKVVAYDLFNRSMPLH), 161–203 (AHMK…AFQL), 209–252 (SHEH…KSFQ), 254–292 (HNQWVRTLELHGDYVITGSNDATIRLSHWPSGNGLSMAV), 318–362 (DDQV…FIPH), 382–421 (GHTSWVRDIKVRGRHLFSCSDDRSIRCWDLVTGQCLKVWP), and 423–461 (ASHGFINCLSVDSDVSNDKLLRELFLSGSIDGKCNVFMR).

The protein belongs to the WD repeat LIS1/nudF family. As to quaternary structure, self-associates. Interacts with NDL1 and dynein.

It localises to the cytoplasm. The protein localises to the cytoskeleton. The protein resides in the spindle pole. Positively regulates the activity of the minus-end directed microtubule motor protein dynein. Plays a central role in positioning the mitotic spindle at the bud neck during cell division. Targets cytoplasmic dynein to microtubule plus ends, thereby promoting dynein-mediated microtubule sliding along the bud cortex and consequently the movement of the mitotic spindle to the bud neck. This is Nuclear distribution protein PAC1 from Eremothecium gossypii (strain ATCC 10895 / CBS 109.51 / FGSC 9923 / NRRL Y-1056) (Yeast).